A 357-amino-acid polypeptide reads, in one-letter code: Probable dual-specificity RNA methyltransferase RlmN (357 aa).

Glu95 acts as the Proton acceptor in catalysis. In terms of domain architecture, Radical SAM core spans Lys105 to Asp343. An intrachain disulfide couples Cys112 to Cys348. [4Fe-4S] cluster contacts are provided by Cys119, Cys123, and Cys126. S-adenosyl-L-methionine is bound by residues Gly174 to Glu175, Ser206, Ser229 to His231, and Asn305. The active-site S-methylcysteine intermediate is Cys348.

This sequence belongs to the radical SAM superfamily. RlmN family. [4Fe-4S] cluster is required as a cofactor.

The protein resides in the cytoplasm. It catalyses the reaction adenosine(2503) in 23S rRNA + 2 reduced [2Fe-2S]-[ferredoxin] + 2 S-adenosyl-L-methionine = 2-methyladenosine(2503) in 23S rRNA + 5'-deoxyadenosine + L-methionine + 2 oxidized [2Fe-2S]-[ferredoxin] + S-adenosyl-L-homocysteine. It carries out the reaction adenosine(37) in tRNA + 2 reduced [2Fe-2S]-[ferredoxin] + 2 S-adenosyl-L-methionine = 2-methyladenosine(37) in tRNA + 5'-deoxyadenosine + L-methionine + 2 oxidized [2Fe-2S]-[ferredoxin] + S-adenosyl-L-homocysteine. Its function is as follows. Specifically methylates position 2 of adenine 2503 in 23S rRNA and position 2 of adenine 37 in tRNAs. The polypeptide is Probable dual-specificity RNA methyltransferase RlmN (Syntrophomonas wolfei subsp. wolfei (strain DSM 2245B / Goettingen)).